The following is a 456-amino-acid chain: Phospholipase A1 member A (456 aa).

Residues 1-25 (MPPDFWERCFWLWGLLLWLSVGSTG) form the signal peptide. The N-linked (GlcNAc...) asparagine glycan is linked to asparagine 34. The active-site Nucleophile is serine 166. The active-site Charge relay system is the aspartate 190. Cysteines 245 and 258 form a disulfide. Histidine 260 (charge relay system) is an active-site residue. 2 cysteine pairs are disulfide-bonded: cysteine 282/cysteine 293 and cysteine 296/cysteine 304.

It belongs to the AB hydrolase superfamily. Lipase family.

It is found in the secreted. It carries out the reaction a 1,2-diacyl-sn-glycero-3-phospho-L-serine + H2O = a 2-acyl-sn-glycero-3-phospho-L-serine + a fatty acid + H(+). It catalyses the reaction 1,2-di-(9Z)-octadecenoyl-sn-glycero-3-phospho-L-serine + H2O = 2-(9Z-octadecenoyl)-sn-glycero-3-phospho-L-serine + (9Z)-octadecenoate + H(+). The catalysed reaction is 1-hexadecanoyl-2-(5Z,8Z,11Z,14Z-eicosatetraenoyl)-sn-glycero-3-phospho-L-serine + H2O = 2-(5Z,8Z,11Z,14Z)-eicosatetraenoyl-sn-glycero-3-phospho-L-serine + hexadecanoate + H(+). The enzyme catalyses a 1-acyl-sn-glycero-3-phospho-L-serine + H2O = sn-glycero-3-phospho-L-serine + a fatty acid + H(+). It carries out the reaction 1-(9Z-octadecenoyl)-sn-glycero-3-phospho-L-serine + H2O = sn-glycero-3-phospho-L-serine + (9Z)-octadecenoate + H(+). Hydrolyzes the ester bond of the acyl group attached at the sn-1 position of phosphatidylserines (phospholipase A1 activity) and 1-acyl-2-lysophosphatidylserines (lysophospholipase activity) in the pathway of phosphatidylserines acyl chain remodeling. Cleaves phosphatidylserines exposed on the outer leaflet of the plasma membrane of apoptotic cells producing 2-acyl-1-lysophosphatidylserines, which in turn enhance mast cell activation and histamine production. Has no activity toward other glycerophospholipids including phosphatidylcholines, phosphatidylethanolamines, phosphatidic acids or phosphatidylinositols, or glycerolipids such as triolein. The protein is Phospholipase A1 member A (PLA1A) of Bos taurus (Bovine).